Here is a 59-residue protein sequence, read N- to C-terminus: Protein translocase subunit SecE (59 aa).

Residues isoleucine 30–isoleucine 50 traverse the membrane as a helical segment.

It belongs to the SecE/SEC61-gamma family. Component of the Sec protein translocase complex. Heterotrimer consisting of SecY, SecE and SecG subunits. The heterotrimers can form oligomers, although 1 heterotrimer is thought to be able to translocate proteins. Interacts with the ribosome. Interacts with SecDF, and other proteins may be involved. Interacts with SecA.

It localises to the cell membrane. In terms of biological role, essential subunit of the Sec protein translocation channel SecYEG. Clamps together the 2 halves of SecY. May contact the channel plug during translocation. This Bacillus licheniformis protein is Protein translocase subunit SecE.